Reading from the N-terminus, the 331-residue chain is GTP 3',8-cyclase (331 aa).

Positions 9–233 constitute a Radical SAM core domain; that stretch reads PFGRRITYLR…VRSSKVTGGP (225 aa). GTP is bound at residue R18. The [4Fe-4S] cluster site is built by C25 and C29. Residue Y31 coordinates S-adenosyl-L-methionine. C32 provides a ligand contact to [4Fe-4S] cluster. Residue R67 participates in GTP binding. G71 is a binding site for S-adenosyl-L-methionine. Residue T98 coordinates GTP. S122 contacts S-adenosyl-L-methionine. A GTP-binding site is contributed by K159. M193 contributes to the S-adenosyl-L-methionine binding site. [4Fe-4S] cluster is bound by residues C257 and C260. Position 262–264 (262–264) interacts with GTP; sequence RVR. C274 is a binding site for [4Fe-4S] cluster.

It belongs to the radical SAM superfamily. MoaA family. Monomer and homodimer. It depends on [4Fe-4S] cluster as a cofactor.

It carries out the reaction GTP + AH2 + S-adenosyl-L-methionine = (8S)-3',8-cyclo-7,8-dihydroguanosine 5'-triphosphate + 5'-deoxyadenosine + L-methionine + A + H(+). Its pathway is cofactor biosynthesis; molybdopterin biosynthesis. Its function is as follows. Catalyzes the cyclization of GTP to (8S)-3',8-cyclo-7,8-dihydroguanosine 5'-triphosphate. In Ectopseudomonas mendocina (strain ymp) (Pseudomonas mendocina), this protein is GTP 3',8-cyclase.